A 508-amino-acid polypeptide reads, in one-letter code: Tyrosine decarboxylase 4 (508 aa).

Position 318 is an N6-(pyridoxal phosphate)lysine (lysine 318).

The protein belongs to the group II decarboxylase family. As to quaternary structure, homodimer. Requires pyridoxal 5'-phosphate as cofactor.

The enzyme catalyses L-tyrosine + H(+) = tyramine + CO2. The protein is Tyrosine decarboxylase 4 (TYRDC-4) of Petroselinum crispum (Parsley).